A 382-amino-acid chain; its full sequence is Pentraxin-related protein PTX3 (382 aa).

The signal sequence occupies residues 1–17 (MHISVILFCALWSAVSA). The stretch at 79 to 137 (VMLRGELQKLQAELGRLEGSLQKLCGPEAPSETRLARALDDLLQASRDAGRRLARLEDA) forms a coiled coil. 2 disulfide bridges follow: Cys-180-Cys-358 and Cys-211-Cys-272. The Pentraxin (PTX) domain occupies 180 to 382 (CETAILFPMR…QPHGGAQYVY (203 aa)). A glycan (N-linked (GlcNAc...) asparagine) is linked at Asn-221.

As to quaternary structure, homooctamer; disulfide-linked. Binds to C1q.

The protein resides in the secreted. Its function is as follows. Plays a role in the regulation of innate resistance to pathogens, inflammatory reactions, possibly clearance of self-components and female fertility. This Bos taurus (Bovine) protein is Pentraxin-related protein PTX3 (PTX3).